Consider the following 308-residue polypeptide: Dual oxidase maturation factor 1 (308 aa).

The Extracellular portion of the chain corresponds to 1–21 (MQANIFPFYPQPRTPFKFDTK). Residues 22–42 (IIEIIIICIVTACTFIIILPG) traverse the membrane as a helical segment. Residues 43 to 49 (IRGKSRS) are Cytoplasmic-facing. Residues 50-70 (IWLLRILTSLFIGAVILAVNF) traverse the membrane as a helical segment. At 71–91 (TSDWEMGTITATTVYKSFSHS) the chain is on the extracellular side. Residues 92–112 (MLNASIGLWIGLKGLNITLIG) traverse the membrane as a helical segment. The Cytoplasmic segment spans residues 113–175 (NPEYQLNETI…GLFQQYCIST (63 aa)). A helical transmembrane segment spans residues 176 to 198 (YYSSGIMWIAFCSWILYNVLFSM). Residue proline 199 is a topological domain, extracellular. A helical membrane pass occupies residues 200-220 (VILYGIYMMFVTAICMLVSLI). Residues 221 to 247 (SFASVRKAPVCNIQFGNSILKTHFGVS) are Cytoplasmic-facing. The chain crosses the membrane as a helical span at residues 248–268 (YWLSLITGLLCLIISLVLLFL). Topologically, residues 269–308 (YKTQPKVLQLIFSYGEEEDLSNKSENEEEHSSVLSLNEIL) are extracellular. N-linked (GlcNAc...) asparagine glycosylation occurs at asparagine 290.

The protein belongs to the DUOXA family.

The protein localises to the membrane. Possible role in maturation and transport from the endoplasmic reticulum to the plasma membrane of functional dual oxidase. The protein is Dual oxidase maturation factor 1 (duoxa1) of Xenopus laevis (African clawed frog).